Here is a 260-residue protein sequence, read N- to C-terminus: Proteasome subunit alpha type-1 (260 aa).

Residues 231-260 (FLEGLEERPQRKPALPADEPAEKAEEPMEH) form a disordered region. The span at 250-260 (PAEKAEEPMEH) shows a compositional bias: basic and acidic residues.

Belongs to the peptidase T1A family. In terms of assembly, the 26S proteasome consists of a 20S proteasome core and two 19S regulatory subunits. The 20S proteasome core is a barrel-shaped complex made of 28 subunits that are arranged in four stacked rings. The two outer rings are each formed by seven alpha subunits, and the two inner rings are formed by seven beta subunits. The proteolytic activity is exerted by three beta-subunits PSMB5, PSMB6 and PSMB7.

It localises to the cytoplasm. It is found in the nucleus. In terms of biological role, component of the 20S core proteasome complex involved in the proteolytic degradation of most intracellular proteins. This complex plays numerous essential roles within the cell by associating with different regulatory particles. Associated with two 19S regulatory particles, forms the 26S proteasome and thus participates in the ATP-dependent degradation of ubiquitinated proteins. The 26S proteasome plays a key role in the maintenance of protein homeostasis by removing misfolded or damaged proteins that could impair cellular functions, and by removing proteins whose functions are no longer required. Associated with the PA200 or PA28, the 20S proteasome mediates ubiquitin-independent protein degradation. This type of proteolysis is required in several pathways including spermatogenesis (20S-PA200 complex) or generation of a subset of MHC class I-presented antigenic peptides (20S-PA28 complex). This Gallus gallus (Chicken) protein is Proteasome subunit alpha type-1 (PSMA1).